Consider the following 383-residue polypeptide: Dual-specificity RNA methyltransferase RlmN (383 aa).

The Proton acceptor role is filled by glutamate 95. The region spanning 101–349 is the Radical SAM core domain; that stretch reads EETRGTLCVS…TTVRKTRGDD (249 aa). Cysteine 108 and cysteine 354 are oxidised to a cystine. 3 residues coordinate [4Fe-4S] cluster: cysteine 115, cysteine 119, and cysteine 122. S-adenosyl-L-methionine-binding positions include 180–181, serine 212, 234–236, and asparagine 311; these read GE and SLH. The active-site S-methylcysteine intermediate is cysteine 354.

The protein belongs to the radical SAM superfamily. RlmN family. [4Fe-4S] cluster serves as cofactor.

The protein localises to the cytoplasm. It catalyses the reaction adenosine(2503) in 23S rRNA + 2 reduced [2Fe-2S]-[ferredoxin] + 2 S-adenosyl-L-methionine = 2-methyladenosine(2503) in 23S rRNA + 5'-deoxyadenosine + L-methionine + 2 oxidized [2Fe-2S]-[ferredoxin] + S-adenosyl-L-homocysteine. It carries out the reaction adenosine(37) in tRNA + 2 reduced [2Fe-2S]-[ferredoxin] + 2 S-adenosyl-L-methionine = 2-methyladenosine(37) in tRNA + 5'-deoxyadenosine + L-methionine + 2 oxidized [2Fe-2S]-[ferredoxin] + S-adenosyl-L-homocysteine. In terms of biological role, specifically methylates position 2 of adenine 2503 in 23S rRNA and position 2 of adenine 37 in tRNAs. m2A2503 modification seems to play a crucial role in the proofreading step occurring at the peptidyl transferase center and thus would serve to optimize ribosomal fidelity. This is Dual-specificity RNA methyltransferase RlmN from Paraburkholderia xenovorans (strain LB400).